The sequence spans 648 residues: Rab11 family-interacting protein 1 (648 aa).

In terms of domain architecture, C2 spans 1 to 129; it reads MSLAASAGRG…DQSRRKKQWY (129 aa). Basic and acidic residues predominate over residues 164–188; it reads SMKDKSRNPFGKLKDKIKGKNKDNT. 3 disordered regions span residues 164-470, 483-503, and 516-555; these read SMKD…GRKG, VRRP…SQNP, and VESK…PKIT. Positions 189–201 are enriched in polar residues; that stretch reads SDTASAIVPSTTP. Serine 205, serine 209, and serine 237 each carry phosphoserine. Polar residues-rich tracts occupy residues 227–242 and 271–296; these read PSLQ…SVLP and SSAS…SNFS. A phosphoserine mark is found at serine 304, serine 319, serine 343, serine 345, serine 347, serine 349, serine 360, serine 361, and serine 386. The span at 314-323 shows a compositional bias: polar residues; it reads DSLSRSNVCI. Basic and acidic residues-rich tracts occupy residues 381–394 and 422–436; these read SDRR…KDSM and ATKE…ESKK. Serine 438 bears the Phosphoserine mark. Positions 445-454 are enriched in basic and acidic residues; the sequence is GKKDVAKGSE. The FIP-RBD domain maps to 576–638; it reads KKYQPSDPAF…EETPNILRVP (63 aa). The interval 584 to 648 is necessary for interaction with RAB4A and RAB11A, subcellular location and endosomal recycling; the sequence is AFAYAQLTHD…AQTGKKAGKM (65 aa).

In terms of assembly, homooligomer. Interacts with RAB11A, RAB11B, RAB25, RAB4A and RAB14.

The protein localises to the recycling endosome. It is found in the cytoplasmic vesicle. A Rab11 effector protein involved in the endosomal recycling process. Also involved in controlling membrane trafficking along the phagocytic pathway and in phagocytosis. Interaction with RAB14 may function in the process of neurite formation. The protein is Rab11 family-interacting protein 1 of Rattus norvegicus (Rat).